The chain runs to 206 residues: Protein-methionine-sulfoxide reductase heme-binding subunit MsrQ (206 aa).

6 helical membrane-spanning segments follow: residues 14–34 (IKPL…WLGA), 45–65 (FLTR…LAIT), 82–102 (MCGL…VWWD), 118–138 (PFIT…ATST), 149–169 (WQVL…HFWW), and 179–199 (QPLL…AAWW).

Belongs to the MsrQ family. As to quaternary structure, heterodimer of a catalytic subunit (MsrP) and a heme-binding subunit (MsrQ). The cofactor is FMN. It depends on heme b as a cofactor.

The protein resides in the cell inner membrane. Its function is as follows. Part of the MsrPQ system that repairs oxidized periplasmic proteins containing methionine sulfoxide residues (Met-O), using respiratory chain electrons. Thus protects these proteins from oxidative-stress damage caused by reactive species of oxygen and chlorine generated by the host defense mechanisms. MsrPQ is essential for the maintenance of envelope integrity under bleach stress, rescuing a wide series of structurally unrelated periplasmic proteins from methionine oxidation. MsrQ provides electrons for reduction to the reductase catalytic subunit MsrP, using the quinone pool of the respiratory chain. The chain is Protein-methionine-sulfoxide reductase heme-binding subunit MsrQ from Bordetella bronchiseptica (strain ATCC BAA-588 / NCTC 13252 / RB50) (Alcaligenes bronchisepticus).